Consider the following 287-residue polypeptide: MNWIERIINKNIVLTTKKMHVPEGIWTKCSGCVQLLYTKELERNLQVCPKCDFHMKISARSRLLAFLDQGSVCELGQELLPKDIFKFKDRKKYKDRLIDAQKKTQEKEALIVMQGTIYSMQVVVAAFEFDFIGGSMSSAVGSRFVQAVNQSLKLKCPFVCFSSSGGARMQEAFVSLMQMAKTSAALAVLYDRCLPYISVLTNPTMGGVSASLGMLGDINIAEPKALIGFAGPRVIEQTVREKLPLGFQRSEFLLEKGVIDLIVRRPDMRLKIANLLSKLTQQSFSEK.

The 263-residue stretch at 25–287 folds into the CoA carboxyltransferase N-terminal domain; that stretch reads IWTKCSGCVQ…KLTQQSFSEK (263 aa). Residues cysteine 29, cysteine 32, cysteine 48, and cysteine 51 each coordinate Zn(2+). The C4-type zinc finger occupies 29–51; the sequence is CSGCVQLLYTKELERNLQVCPKC.

The protein belongs to the AccD/PCCB family. Acetyl-CoA carboxylase is a heterohexamer composed of biotin carboxyl carrier protein (AccB), biotin carboxylase (AccC) and two subunits each of ACCase subunit alpha (AccA) and ACCase subunit beta (AccD). It depends on Zn(2+) as a cofactor.

It is found in the cytoplasm. The catalysed reaction is N(6)-carboxybiotinyl-L-lysyl-[protein] + acetyl-CoA = N(6)-biotinyl-L-lysyl-[protein] + malonyl-CoA. The protein operates within lipid metabolism; malonyl-CoA biosynthesis; malonyl-CoA from acetyl-CoA: step 1/1. Functionally, component of the acetyl coenzyme A carboxylase (ACC) complex. Biotin carboxylase (BC) catalyzes the carboxylation of biotin on its carrier protein (BCCP) and then the CO(2) group is transferred by the transcarboxylase to acetyl-CoA to form malonyl-CoA. The polypeptide is Acetyl-coenzyme A carboxylase carboxyl transferase subunit beta (Blochmanniella floridana).